A 379-amino-acid chain; its full sequence is Chaperone protein DnaJ (379 aa).

In terms of domain architecture, J spans 5-70; the sequence is DYYESLGVAK…QKRAAYDQYG (66 aa). The segment at 134–212 adopts a CR-type zinc-finger fold; that stretch reads GVTKEIRIPA…CHGHGRVEKS (79 aa). The Zn(2+) site is built by Cys-147, Cys-150, Cys-164, Cys-167, Cys-186, Cys-189, Cys-200, and Cys-203. 4 CXXCXGXG motif repeats span residues 147–154, 164–171, 186–193, and 200–207; these read CDVCHGNG, CPTCHGNG, CPHCHGRG, and CIKCHGHG.

The protein belongs to the DnaJ family. As to quaternary structure, homodimer. It depends on Zn(2+) as a cofactor.

Its subcellular location is the cytoplasm. Its function is as follows. Participates actively in the response to hyperosmotic and heat shock by preventing the aggregation of stress-denatured proteins and by disaggregating proteins, also in an autonomous, DnaK-independent fashion. Unfolded proteins bind initially to DnaJ; upon interaction with the DnaJ-bound protein, DnaK hydrolyzes its bound ATP, resulting in the formation of a stable complex. GrpE releases ADP from DnaK; ATP binding to DnaK triggers the release of the substrate protein, thus completing the reaction cycle. Several rounds of ATP-dependent interactions between DnaJ, DnaK and GrpE are required for fully efficient folding. Also involved, together with DnaK and GrpE, in the DNA replication of plasmids through activation of initiation proteins. This chain is Chaperone protein DnaJ, found in Pectobacterium atrosepticum (strain SCRI 1043 / ATCC BAA-672) (Erwinia carotovora subsp. atroseptica).